The following is a 213-amino-acid chain: Reticulon-3 (213 aa).

A compositionally biased stretch (polar residues) spans Met1–Ala16. Residues Met1–Gly20 form a disordered region. A Reticulon domain is found at Val25 to Glu213. 2 helical membrane-spanning segments follow: residues Met45–Leu65 and Val154–Val174.

As to quaternary structure, homodimer.

The protein resides in the endoplasmic reticulum membrane. Its subcellular location is the golgi apparatus membrane. Its function is as follows. May be involved in membrane trafficking in the early secretory pathway. The protein is Reticulon-3 (rtn3) of Xenopus tropicalis (Western clawed frog).